The primary structure comprises 343 residues: Probable dual-specificity RNA methyltransferase RlmN (343 aa).

Residue glutamate 91 is the Proton acceptor of the active site. In terms of domain architecture, Radical SAM core spans 97–326 (HPGRITACIS…AEIRQEKGSD (230 aa)). Cysteine 104 and cysteine 331 are joined by a disulfide. Residues cysteine 111, cysteine 115, and cysteine 118 each contribute to the [4Fe-4S] cluster site. S-adenosyl-L-methionine-binding positions include 158–159 (GE), serine 190, 213–215 (SLH), and asparagine 289. Residue cysteine 331 is the S-methylcysteine intermediate of the active site.

The protein belongs to the radical SAM superfamily. RlmN family. It depends on [4Fe-4S] cluster as a cofactor.

It localises to the cytoplasm. It catalyses the reaction adenosine(2503) in 23S rRNA + 2 reduced [2Fe-2S]-[ferredoxin] + 2 S-adenosyl-L-methionine = 2-methyladenosine(2503) in 23S rRNA + 5'-deoxyadenosine + L-methionine + 2 oxidized [2Fe-2S]-[ferredoxin] + S-adenosyl-L-homocysteine. The catalysed reaction is adenosine(37) in tRNA + 2 reduced [2Fe-2S]-[ferredoxin] + 2 S-adenosyl-L-methionine = 2-methyladenosine(37) in tRNA + 5'-deoxyadenosine + L-methionine + 2 oxidized [2Fe-2S]-[ferredoxin] + S-adenosyl-L-homocysteine. Functionally, specifically methylates position 2 of adenine 2503 in 23S rRNA and position 2 of adenine 37 in tRNAs. The chain is Probable dual-specificity RNA methyltransferase RlmN from Thermotoga neapolitana (strain ATCC 49049 / DSM 4359 / NBRC 107923 / NS-E).